A 580-amino-acid polypeptide reads, in one-letter code: Phosphomethylpyrimidine synthase (580 aa).

Residues 1–58 form a disordered region; sequence MTPTQNEIHPKHSYSPIRKHGLEVPETEIALDDSPSGPNEPFRIYRTRGPETDPTLGL. Substrate is bound by residues Asn180, Met209, Tyr238, His274, 294 to 296, 335 to 338, and Glu374; these read SRG and DGLR. His378 contributes to the Zn(2+) binding site. Tyr401 contacts substrate. Zn(2+) is bound at residue His442. The [4Fe-4S] cluster site is built by Cys522, Cys525, and Cys530. A disordered region spans residues 554–580; the sequence is VGASDSTEGMKEKSREFVAGGGEVYRE.

The protein belongs to the ThiC family. The cofactor is [4Fe-4S] cluster.

The enzyme catalyses 5-amino-1-(5-phospho-beta-D-ribosyl)imidazole + S-adenosyl-L-methionine = 4-amino-2-methyl-5-(phosphooxymethyl)pyrimidine + CO + 5'-deoxyadenosine + formate + L-methionine + 3 H(+). Its pathway is cofactor biosynthesis; thiamine diphosphate biosynthesis. Catalyzes the synthesis of the hydroxymethylpyrimidine phosphate (HMP-P) moiety of thiamine from aminoimidazole ribotide (AIR) in a radical S-adenosyl-L-methionine (SAM)-dependent reaction. This chain is Phosphomethylpyrimidine synthase, found in Corynebacterium efficiens (strain DSM 44549 / YS-314 / AJ 12310 / JCM 11189 / NBRC 100395).